We begin with the raw amino-acid sequence, 373 residues long: MLKLIEDAIERTSAAPQASAPEVRTQSDIDEELKKLLEQIQAKIYVVGVGGAGCNTINRMMQVGIQGAKIIAMNTDAQDLLKVRAHKKILLGKELTRGLGAGNNPKIGEEAAKESEREIREALEGADMVFITCGLGGGTGTGAAPVVAEIAKKMGALTVAVVTLPFTVEGIRRIKNAEYGLERLKKNTDTVIVIPNDKLMEVAPNLPIHMAFKVADEILVQAVKGITELITKPGLVNLDFNDVRAVMKDGGVAMIGIGESDSEKRALEAAQQALNSPLLDVDISGAKGALISISGSDVKLEEAQQIIELVTSKLDPEAQVIWGIQLDEELGKMIRILLVVTGVSSPYSVAEEEEESYFGEEERRPIKLDLDEL.

Residues 51-55, 138-140, Glu-169, Arg-173, and Asp-216 each bind GTP; these read GAGCN and GTG. Positions 354–373 are disordered; sequence EESYFGEEERRPIKLDLDEL. Positions 360–373 are enriched in basic and acidic residues; sequence EEERRPIKLDLDEL.

The protein belongs to the FtsZ family. In terms of assembly, homodimer. Polymerizes to form a dynamic ring structure in a strictly GTP-dependent manner. Interacts directly with several other division proteins.

It localises to the cytoplasm. In terms of biological role, essential cell division protein that forms a contractile ring structure (Z ring) at the future cell division site. The regulation of the ring assembly controls the timing and the location of cell division. One of the functions of the FtsZ ring is to recruit other cell division proteins to the septum to produce a new cell wall between the dividing cells. Binds GTP and shows GTPase activity. This chain is Cell division protein FtsZ 1, found in Thermococcus kodakarensis (strain ATCC BAA-918 / JCM 12380 / KOD1) (Pyrococcus kodakaraensis (strain KOD1)).